The following is a 138-amino-acid chain: Transcription antitermination protein NusB (138 aa).

The protein belongs to the NusB family.

In terms of biological role, involved in transcription antitermination. Required for transcription of ribosomal RNA (rRNA) genes. Binds specifically to the boxA antiterminator sequence of the ribosomal RNA (rrn) operons. The polypeptide is Transcription antitermination protein NusB (Yersinia pseudotuberculosis serotype O:1b (strain IP 31758)).